An 807-amino-acid chain; its full sequence is uncharacterized protein (807 aa).

This sequence belongs to the IIV-6 155L family.

This is an uncharacterized protein from Aedes vexans (Inland floodwater mosquito).